The sequence spans 470 residues: FRIGIDA-like protein 1 (470 aa).

The stretch at Lys-336 to Asn-369 forms a coiled coil. The interval Glu-355 to Leu-400 is disordered. The segment covering Asn-388–Leu-400 has biased composition (polar residues).

It belongs to the Frigida family. As to quaternary structure, component of the transcription activator complex FRI-C composed of FRI, FRL1, SUF4, FLX and FES1. Interacts with FRI and SUF4. As to expression, expressed during seed development and in dry seed. Preferentially expressed in the chalazal endosperm during early stages of seed development.

Required for FRI-mediated up-regulation of FLC transcripts, but not redundant with FRI and only partially redundant with FRL2. Required for the stabilization of the FRI-C complex. This is FRIGIDA-like protein 1 (FRL1) from Arabidopsis thaliana (Mouse-ear cress).